The sequence spans 211 residues: FMN-dependent NADH:quinone oxidoreductase 2 (211 aa).

FMN is bound by residues serine 10 and 17-19 (SRS).

The protein belongs to the azoreductase type 1 family. In terms of assembly, homodimer. The cofactor is FMN.

It carries out the reaction 2 a quinone + NADH + H(+) = 2 a 1,4-benzosemiquinone + NAD(+). The catalysed reaction is N,N-dimethyl-1,4-phenylenediamine + anthranilate + 2 NAD(+) = 2-(4-dimethylaminophenyl)diazenylbenzoate + 2 NADH + 2 H(+). Functionally, quinone reductase that provides resistance to thiol-specific stress caused by electrophilic quinones. Its function is as follows. Also exhibits azoreductase activity. Catalyzes the reductive cleavage of the azo bond in aromatic azo compounds to the corresponding amines. The polypeptide is FMN-dependent NADH:quinone oxidoreductase 2 (Listeria innocua serovar 6a (strain ATCC BAA-680 / CLIP 11262)).